A 132-amino-acid polypeptide reads, in one-letter code: ATP synthase epsilon chain, chloroplastic (132 aa).

The protein belongs to the ATPase epsilon chain family. In terms of assembly, F-type ATPases have 2 components, CF(1) - the catalytic core - and CF(0) - the membrane proton channel. CF(1) has five subunits: alpha(3), beta(3), gamma(1), delta(1), epsilon(1). CF(0) has three main subunits: a, b and c.

The protein localises to the plastid. Its subcellular location is the chloroplast thylakoid membrane. Its function is as follows. Produces ATP from ADP in the presence of a proton gradient across the membrane. This Pylaiella littoralis (Seaweed) protein is ATP synthase epsilon chain, chloroplastic.